Reading from the N-terminus, the 438-residue chain is Trigger factor (438 aa).

The PPIase FKBP-type domain occupies 170-255 (GDTVVIDFDG…IHELKKLETP (86 aa)).

This sequence belongs to the FKBP-type PPIase family. Tig subfamily.

The protein resides in the cytoplasm. It catalyses the reaction [protein]-peptidylproline (omega=180) = [protein]-peptidylproline (omega=0). In terms of biological role, involved in protein export. Acts as a chaperone by maintaining the newly synthesized protein in an open conformation. Functions as a peptidyl-prolyl cis-trans isomerase. This is Trigger factor (tig) from Oenococcus oeni (Leuconostoc oenos).